A 176-amino-acid polypeptide reads, in one-letter code: NAD(P)H-quinone oxidoreductase subunit 6, chloroplastic (176 aa).

A run of 5 helical transmembrane segments spans residues 10–30 (FLLV…VLLT), 32–52 (PIFS…FYIL), 63–83 (LLIY…FMNS), 92–112 (LWTV…VSLV), and 152–172 (FFLP…GTIV).

This sequence belongs to the complex I subunit 6 family. As to quaternary structure, NDH is composed of at least 16 different subunits, 5 of which are encoded in the nucleus.

It is found in the plastid. The protein localises to the chloroplast thylakoid membrane. It carries out the reaction a plastoquinone + NADH + (n+1) H(+)(in) = a plastoquinol + NAD(+) + n H(+)(out). The enzyme catalyses a plastoquinone + NADPH + (n+1) H(+)(in) = a plastoquinol + NADP(+) + n H(+)(out). Its function is as follows. NDH shuttles electrons from NAD(P)H:plastoquinone, via FMN and iron-sulfur (Fe-S) centers, to quinones in the photosynthetic chain and possibly in a chloroplast respiratory chain. The immediate electron acceptor for the enzyme in this species is believed to be plastoquinone. Couples the redox reaction to proton translocation, and thus conserves the redox energy in a proton gradient. The polypeptide is NAD(P)H-quinone oxidoreductase subunit 6, chloroplastic (ndhG) (Cicer arietinum (Chickpea)).